The primary structure comprises 231 residues: 7-cyano-7-deazaguanine synthase (231 aa).

ATP is bound at residue 8–18 (FSGGQDSTTCL). Zn(2+) is bound by residues cysteine 188, cysteine 197, cysteine 200, and cysteine 203.

The protein belongs to the QueC family. It depends on Zn(2+) as a cofactor.

The catalysed reaction is 7-carboxy-7-deazaguanine + NH4(+) + ATP = 7-cyano-7-deazaguanine + ADP + phosphate + H2O + H(+). The protein operates within purine metabolism; 7-cyano-7-deazaguanine biosynthesis. Functionally, catalyzes the ATP-dependent conversion of 7-carboxy-7-deazaguanine (CDG) to 7-cyano-7-deazaguanine (preQ(0)). The protein is 7-cyano-7-deazaguanine synthase of Sodalis glossinidius (strain morsitans).